A 537-amino-acid chain; its full sequence is Formimidoyltransferase-cyclodeaminase (537 aa).

The tract at residues 1–181 (MNKLVECVPN…GASVTGARSF (181 aa)) is formiminotransferase N-subdomain. The For formimidoyltransferase activity role is filled by His82. A folate-binding site is contributed by 163 to 172 (GPAKFIPSYG). Positions 182–326 (LIAYNVNILG…PKKRIIDYMV (145 aa)) are formiminotransferase C-subdomain. Residues 327–335 (QEDLKVTQP) are linker. Residues 336-537 (LASMSVRGFV…VLEILSNRKE (202 aa)) are cyclodeaminase/cyclohydrolase. Residue Asp413 is the For cyclodeaminase activity of the active site.

The protein in the C-terminal section; belongs to the cyclodeaminase/cyclohydrolase family. In the N-terminal section; belongs to the formiminotransferase family. Homooctamer, including four polyglutamate binding sites. The subunits are arranged as a tetramer of dimers, and form a planar ring-shaped structure.

The protein resides in the cytoplasm. It is found in the cytosol. The protein localises to the golgi apparatus. Its subcellular location is the cytoskeleton. It localises to the microtubule organizing center. The protein resides in the centrosome. It is found in the centriole. It catalyses the reaction 5-formimidoyltetrahydrofolate + L-glutamate = N-formimidoyl-L-glutamate + (6S)-5,6,7,8-tetrahydrofolate. It carries out the reaction 5-formimidoyltetrahydrofolate + 2 H(+) = (6R)-5,10-methenyltetrahydrofolate + NH4(+). The protein operates within amino-acid degradation; L-histidine degradation into L-glutamate; L-glutamate from N-formimidoyl-L-glutamate (transferase route): step 1/1. Its function is as follows. Folate-dependent enzyme, that displays both transferase and deaminase activity. Serves to channel one-carbon units from formiminoglutamate to the folate pool. This is Formimidoyltransferase-cyclodeaminase (ftcd) from Dictyostelium discoideum (Social amoeba).